We begin with the raw amino-acid sequence, 446 residues long: Enolase (446 aa).

2 residues coordinate substrate: His-164 and Glu-173. Glu-216 functions as the Proton donor in the catalytic mechanism. Mg(2+)-binding residues include Asp-251, Glu-302, and Asp-329. Glu-302 and Asp-329 together coordinate substrate. The active-site Proton acceptor is Lys-354. Substrate is bound by residues 381–384 and Lys-405; that span reads SHRS.

This sequence belongs to the enolase family. As to quaternary structure, homodimer. Requires Mg(2+) as cofactor.

The protein localises to the cytoplasm. It carries out the reaction (2R)-2-phosphoglycerate = phosphoenolpyruvate + H2O. It functions in the pathway carbohydrate degradation; glycolysis; pyruvate from D-glyceraldehyde 3-phosphate: step 4/5. This is Enolase (ENO1) from Oryza sativa subsp. japonica (Rice).